A 341-amino-acid polypeptide reads, in one-letter code: MKKILGIESSCDDTSVSIITEDREILSNIVISQNTEHADYKGVVPEIAARSHLANLEKAMKQALLESNTSLDEITAIAATSGPGLIGGVIVGSMFAKSLSSVLNKPFIAVNHLEGHALTARLTDNIPYPYLLLLASGGHCQFVAVLGLGKYKILGSTIDDAVGEAFDKVAKMLDLPFPGGPKIEKRAKLGDPYKYKFPKPIINSGDCNMSFSGLKTAVRTLIMSLQEINDTIINDIAASFQFTIGEILSSKILEAIKVYEQITNDFNRNIVIAGGVAANKYLQELLSNCTKIHGYQLIYPPTTLCTDNAAMIAYAGLERYNNGLFTPLNFCPKARWSLEEI.

H112 and H116 together coordinate Fe cation. Substrate-binding positions include 134–138, D167, G180, and N279; that span reads LASGG. D307 is a Fe cation binding site.

Belongs to the KAE1 / TsaD family. Fe(2+) serves as cofactor.

Its subcellular location is the cytoplasm. It carries out the reaction L-threonylcarbamoyladenylate + adenosine(37) in tRNA = N(6)-L-threonylcarbamoyladenosine(37) in tRNA + AMP + H(+). Required for the formation of a threonylcarbamoyl group on adenosine at position 37 (t(6)A37) in tRNAs that read codons beginning with adenine. Is involved in the transfer of the threonylcarbamoyl moiety of threonylcarbamoyl-AMP (TC-AMP) to the N6 group of A37, together with TsaE and TsaB. TsaD likely plays a direct catalytic role in this reaction. The protein is tRNA N6-adenosine threonylcarbamoyltransferase of Rickettsia bellii (strain OSU 85-389).